We begin with the raw amino-acid sequence, 272 residues long: Putative MgpC-like protein MPN_102 (272 aa).

This sequence belongs to the MgpC family.

The chain is Putative MgpC-like protein MPN_102 from Mycoplasma pneumoniae (strain ATCC 29342 / M129 / Subtype 1) (Mycoplasmoides pneumoniae).